We begin with the raw amino-acid sequence, 365 residues long: DNA polymerase IV (365 aa).

One can recognise a UmuC domain in the interval 14 to 198 (IIHIDMDAFF…LPIEKFHGVG (185 aa)). Positions 18 and 116 each coordinate Mg(2+). The active site involves glutamate 117.

The protein belongs to the DNA polymerase type-Y family. As to quaternary structure, monomer. Mg(2+) serves as cofactor.

The protein resides in the cytoplasm. It carries out the reaction DNA(n) + a 2'-deoxyribonucleoside 5'-triphosphate = DNA(n+1) + diphosphate. Functionally, poorly processive, error-prone DNA polymerase involved in untargeted mutagenesis. Copies undamaged DNA at stalled replication forks, which arise in vivo from mismatched or misaligned primer ends. These misaligned primers can be extended by PolIV. Exhibits no 3'-5' exonuclease (proofreading) activity. May be involved in translesional synthesis, in conjunction with the beta clamp from PolIII. This chain is DNA polymerase IV, found in Streptococcus pyogenes serotype M3 (strain ATCC BAA-595 / MGAS315).